A 288-amino-acid polypeptide reads, in one-letter code: Adenylate kinase (288 aa).

65 to 70 (GVGKGT) is an ATP binding site. Positions 85-114 (ATGDLVRDELKSSGPLSKQLAEIVNQGKLV) are NMP. Residues Thr-86, Arg-91, 112-114 (KLV), 142-145 (GFPR), and Gln-149 each bind AMP. The LID stretch occupies residues 178 to 226 (GRRICSECGKNFNVASIDVAGENGAPRISMARLNPPFTVCFKLITRADD). Arg-179 contributes to the ATP binding site. AMP is bound by residues Arg-223 and Arg-234. Gly-262 contacts ATP.

This sequence belongs to the adenylate kinase family. As to quaternary structure, monomer.

Its subcellular location is the cytoplasm. It catalyses the reaction AMP + ATP = 2 ADP. In terms of biological role, catalyzes the reversible transfer of the terminal phosphate group between ATP and AMP. Plays an important role in cellular energy homeostasis and in adenine nucleotide metabolism. In Solanum tuberosum (Potato), this protein is Adenylate kinase (ADK).